Consider the following 251-residue polypeptide: Phosphate import ATP-binding protein PstB (251 aa).

Residues 5 to 246 enclose the ABC transporter domain; it reads IKIRGVNFFY…PKDKRTEDYI (242 aa). 37-44 is a binding site for ATP; it reads GPSGCGKS.

The protein belongs to the ABC transporter superfamily. Phosphate importer (TC 3.A.1.7) family. As to quaternary structure, the complex is composed of two ATP-binding proteins (PstB), two transmembrane proteins (PstC and PstA) and a solute-binding protein (PstS).

It localises to the cell membrane. It carries out the reaction phosphate(out) + ATP + H2O = ADP + 2 phosphate(in) + H(+). Functionally, part of the ABC transporter complex PstSACB involved in phosphate import. Responsible for energy coupling to the transport system. The chain is Phosphate import ATP-binding protein PstB from Dehalococcoides mccartyi (strain ATCC BAA-2266 / KCTC 15142 / 195) (Dehalococcoides ethenogenes (strain 195)).